We begin with the raw amino-acid sequence, 142 residues long: Large ribosomal subunit protein uL13 (142 aa).

This sequence belongs to the universal ribosomal protein uL13 family. In terms of assembly, part of the 50S ribosomal subunit.

Functionally, this protein is one of the early assembly proteins of the 50S ribosomal subunit, although it is not seen to bind rRNA by itself. It is important during the early stages of 50S assembly. This Cronobacter sakazakii (strain ATCC BAA-894) (Enterobacter sakazakii) protein is Large ribosomal subunit protein uL13.